We begin with the raw amino-acid sequence, 355 residues long: Peptide chain release factor 1 (355 aa).

Residue Q233 is modified to N5-methylglutamine.

Belongs to the prokaryotic/mitochondrial release factor family. In terms of processing, methylated by PrmC. Methylation increases the termination efficiency of RF1.

It is found in the cytoplasm. Peptide chain release factor 1 directs the termination of translation in response to the peptide chain termination codons UAG and UAA. The polypeptide is Peptide chain release factor 1 (Amoebophilus asiaticus (strain 5a2)).